The primary structure comprises 310 residues: Methionyl-tRNA formyltransferase (310 aa).

Residue 109-112 coordinates (6S)-5,6,7,8-tetrahydrofolate; that stretch reads SLLP.

Belongs to the Fmt family.

It carries out the reaction L-methionyl-tRNA(fMet) + (6R)-10-formyltetrahydrofolate = N-formyl-L-methionyl-tRNA(fMet) + (6S)-5,6,7,8-tetrahydrofolate + H(+). Functionally, attaches a formyl group to the free amino group of methionyl-tRNA(fMet). The formyl group appears to play a dual role in the initiator identity of N-formylmethionyl-tRNA by promoting its recognition by IF2 and preventing the misappropriation of this tRNA by the elongation apparatus. This Macrococcus caseolyticus (strain JCSC5402) (Macrococcoides caseolyticum) protein is Methionyl-tRNA formyltransferase.